Reading from the N-terminus, the 518-residue chain is Protein translocase subunit SecD (518 aa).

The next 6 membrane-spanning stretches (helical) occupy residues 9–29, 356–376, 377–397, 406–426, 451–473, and 486–506; these read IVLSIICTVFAIICALPNFIQ, GKKAGLIGFTAVCIFMILSYG, VIGLFANIALILALLYILALL, LPGIAGIILTMGMAVDANVLI, AFATIIDSNLTTLIVAFALYIFG, and IGIISSMFSAIIITKLLIDIW.

This sequence belongs to the SecD/SecF family. SecD subfamily. As to quaternary structure, forms a complex with SecF. Part of the essential Sec protein translocation apparatus which comprises SecA, SecYEG and auxiliary proteins SecDF-YajC and YidC.

It localises to the cell inner membrane. Part of the Sec protein translocase complex. Interacts with the SecYEG preprotein conducting channel. SecDF uses the proton motive force (PMF) to complete protein translocation after the ATP-dependent function of SecA. The chain is Protein translocase subunit SecD from Rickettsia typhi (strain ATCC VR-144 / Wilmington).